Here is a 326-residue protein sequence, read N- to C-terminus: Probable cell division protein WhiA (326 aa).

The H-T-H motif DNA-binding region spans 275–308; the sequence is SLEELGALADPPLTKDAIAGRIRRLLALADKRAR.

This sequence belongs to the WhiA family.

Its function is as follows. Involved in cell division and chromosome segregation. The protein is Probable cell division protein WhiA of Salinispora arenicola (strain CNS-205).